A 338-amino-acid chain; its full sequence is MKCLVCCSYASSRNFGALSCSACKMFFTRATKNYAKFTCKYDKKCFESFTILPKCQFCRFKKCLEIGMRFSEPKQQLFNLNNSVDQDLIILLGNLAVKDGVHYSNFLNFYSLEDPSMDDILADRSRMKLMKRTLEIKTKSHEWTFLGSYYKIAQFLDFDFVKTMSLADRKILFSYNTLRMGSLSRSMRTYLDKRDCLMTPSGDDLFSPAVRGLFDKTPEIINRILCQVVGRLMEIKITYEEYLLLIMIVFCNPSISHELSDSARETLSKYQNMYASFLFRFCQLKNQHKAPTRFNDILSICNVNNKNVEDYCFVHMMFQCMVPEFKFKKLVNDIIIRS.

The segment at residues 1–75 (MKCLVCCSYA…IGMRFSEPKQ (75 aa)) is a DNA-binding region (nuclear receptor). NR C4-type zinc fingers lie at residues 3-23 (CLVC…CSAC) and 39-63 (CKYD…FKKC). An NR LBD domain is found at 98–337 (KDGVHYSNFL…KKLVNDIIIR (240 aa)).

It belongs to the nuclear hormone receptor family.

Its subcellular location is the nucleus. Orphan nuclear receptor. In Caenorhabditis elegans, this protein is Nuclear hormone receptor family member nhr-52 (nhr-52).